Consider the following 357-residue polypeptide: Hyaluronidase (357 aa).

The first 26 residues, 1 to 26 (MLLVTLFLFFLQALVNGDSCGSNCEK), serve as a signal peptide directing secretion. 2 cysteine pairs are disulfide-bonded: Cys45/Cys334 and Cys211/Cys223. Residues Asn105 and Asn125 are each glycosylated (N-linked (GlcNAc...) asparagine). Residue Glu135 is the Proton donor of the active site. Asn153 carries N-linked (GlcNAc...) asparagine glycosylation. The N-linked (GlcNAc...) asparagine glycan is linked to Asn351.

It belongs to the glycosyl hydrolase 56 family.

The protein localises to the secreted. The catalysed reaction is Random hydrolysis of (1-&gt;4)-linkages between N-acetyl-beta-D-glucosamine and D-glucuronate residues in hyaluronate.. Functionally, hydrolyzes high molecular weight hyaluronic acid to produce small oligosaccharides. This chain is Hyaluronidase, found in Vespa magnifica (Hornet).